The following is a 602-amino-acid chain: Elongation factor 4 (602 aa).

The tr-type G domain occupies 6–188 (DHIRNFSIVA…AIVNKLPAPK (183 aa)). Residues 18–23 (DHGKST) and 135–138 (NKID) contribute to the GTP site.

This sequence belongs to the TRAFAC class translation factor GTPase superfamily. Classic translation factor GTPase family. LepA subfamily.

Its subcellular location is the cell inner membrane. It catalyses the reaction GTP + H2O = GDP + phosphate + H(+). Its function is as follows. Required for accurate and efficient protein synthesis under certain stress conditions. May act as a fidelity factor of the translation reaction, by catalyzing a one-codon backward translocation of tRNAs on improperly translocated ribosomes. Back-translocation proceeds from a post-translocation (POST) complex to a pre-translocation (PRE) complex, thus giving elongation factor G a second chance to translocate the tRNAs correctly. Binds to ribosomes in a GTP-dependent manner. The sequence is that of Elongation factor 4 from Brucella melitensis biotype 2 (strain ATCC 23457).